Reading from the N-terminus, the 224-residue chain is Uridylate kinase (224 aa).

9-10 (GS) is a binding site for ATP. Gly-43 is a binding site for UMP. ATP-binding residues include Gly-44 and Arg-48. Residues Asp-65 and 113–119 (TEPAHST) each bind UMP. 3 residues coordinate ATP: Thr-139, Tyr-145, and Asp-148.

The protein belongs to the UMP kinase family. As to quaternary structure, homohexamer.

The protein resides in the cytoplasm. It carries out the reaction UMP + ATP = UDP + ADP. It participates in pyrimidine metabolism; CTP biosynthesis via de novo pathway; UDP from UMP (UMPK route): step 1/1. With respect to regulation, inhibited by UTP. In terms of biological role, catalyzes the reversible phosphorylation of UMP to UDP. This chain is Uridylate kinase, found in Methanothermobacter thermautotrophicus (strain ATCC 29096 / DSM 1053 / JCM 10044 / NBRC 100330 / Delta H) (Methanobacterium thermoautotrophicum).